Reading from the N-terminus, the 217-residue chain is Small ribosomal subunit protein uS3c (217 aa).

Positions 39-109 (IRSCIEKQLH…QIRINLIEIT (71 aa)) constitute a KH type-2 domain.

Belongs to the universal ribosomal protein uS3 family. In terms of assembly, part of the 30S ribosomal subunit.

The protein resides in the plastid. Its subcellular location is the chloroplast. The protein is Small ribosomal subunit protein uS3c (rps3) of Gracilaria tenuistipitata var. liui (Red alga).